We begin with the raw amino-acid sequence, 370 residues long: Proto-oncogene Wnt-1 (370 aa).

The signal sequence occupies residues 1 to 27; that stretch reads MGLWALLPSWVSTTLLLALTALPAALA. N-linked (GlcNAc...) asparagine glycosylation is present at asparagine 29. 11 disulfide bridges follow: cysteine 93/cysteine 104, cysteine 143/cysteine 151, cysteine 153/cysteine 170, cysteine 218/cysteine 232, cysteine 220/cysteine 227, cysteine 299/cysteine 330, cysteine 315/cysteine 325, cysteine 329/cysteine 369, cysteine 345/cysteine 360, cysteine 347/cysteine 357, and cysteine 352/cysteine 353. The O-palmitoleoyl serine; by PORCN moiety is linked to residue serine 224. 2 N-linked (GlcNAc...) asparagine glycosylation sites follow: asparagine 316 and asparagine 346. Asparagine 359 carries N-linked (GlcNAc...) asparagine glycosylation.

The protein belongs to the Wnt family. In terms of assembly, forms a soluble 1:1 complex with AFM; this prevents oligomerization and is required for prolonged biological activity. The complex with AFM may represent the physiological form in body fluids. Interacts with PORCN. Interacts with RSPO1, RSPO2 and RSPO3. Interacts with WLS. In terms of processing, palmitoleoylation is required for efficient binding to frizzled receptors. Palmitoleoylation is necessary for proper trafficking to cell surface. Depalmitoleoylated by NOTUM, leading to inhibit Wnt signaling pathway. Testis and mid-gestational embryos. In the testis, detected only in postmeiotic germ cells undergoing differentiation from round spermatids into mature spermatozoa. In the embryos, expression is restricted to the developing CNS in regions of the neural tube other than the telencephalon. Expressed in osteoblast; expression levels increase with advancing osteoblast differentiation. Expressed in the brain, femur, spleen, and hematopoietic bone marrow.

It localises to the secreted. The protein resides in the extracellular space. It is found in the extracellular matrix. Its function is as follows. Ligand for members of the frizzled family of seven transmembrane receptors. Acts in the canonical Wnt signaling pathway by promoting beta-catenin-dependent transcriptional activation. In some developmental processes, is also a ligand for the coreceptor RYK, thus triggering Wnt signaling. Plays an essential role in the development of the embryonic brain and central nervous system (CNS). Has a role in osteoblast function, bone development and bone homeostasis. This is Proto-oncogene Wnt-1 (Wnt1) from Mus musculus (Mouse).